Consider the following 414-residue polypeptide: Multidrug resistance protein MdtG (414 aa).

Transmembrane regions (helical) follow at residues leucine 14–phenylalanine 34, leucine 56–alanine 76, alanine 89–leucine 109, alanine 113–valine 133, threonine 144–alanine 164, proline 171–valine 191, isoleucine 219–isoleucine 239, leucine 254–proline 274, isoleucine 288–threonine 308, and alanine 376–leucine 396.

The protein belongs to the major facilitator superfamily. DHA1 family. MdtG (TC 2.A.1.2.20) subfamily.

Its subcellular location is the cell inner membrane. This is Multidrug resistance protein MdtG from Yersinia enterocolitica serotype O:8 / biotype 1B (strain NCTC 13174 / 8081).